The following is a 489-amino-acid chain: uncharacterized protein (489 aa).

The region spanning 2 to 84 (IKITVKRFNG…GMIIEPLRGF (83 aa)) is the 2Fe-2S ferredoxin-type domain. Residues C48, C53, C56, and C68 each coordinate [2Fe-2S] cluster. 4Fe-4S ferredoxin-type domains lie at 123 to 155 (KYVE…YPGP) and 177 to 205 (TAYF…IVHR). [4Fe-4S] cluster contacts are provided by C134, C137, C140, C144, C186, C189, C192, and C196.

The protein belongs to the succinate dehydrogenase/fumarate reductase iron-sulfur protein family.

This is an uncharacterized protein from Methanocaldococcus jannaschii (strain ATCC 43067 / DSM 2661 / JAL-1 / JCM 10045 / NBRC 100440) (Methanococcus jannaschii).